Reading from the N-terminus, the 145-residue chain is Putative pre-16S rRNA nuclease (145 aa).

This sequence belongs to the YqgF nuclease family.

It localises to the cytoplasm. Could be a nuclease involved in processing of the 5'-end of pre-16S rRNA. The polypeptide is Putative pre-16S rRNA nuclease (Levilactobacillus brevis (strain ATCC 367 / BCRC 12310 / CIP 105137 / JCM 1170 / LMG 11437 / NCIMB 947 / NCTC 947) (Lactobacillus brevis)).